Here is a 356-residue protein sequence, read N- to C-terminus: GMP reductase (356 aa).

NADP(+)-binding positions include Ser26–Arg27, Lys78, Asp132–Ala134, and Ile183–Gly184. Residues Gly184, Gly186, and Cys189 each contribute to the K(+) site. Cys189 serves as the catalytic Thioimidate intermediate. Catalysis depends on Thr191, which acts as the Proton donor/acceptor. A K(+)-binding site is contributed by Arg192. Residues Asp222–Gly224, Gly245–Gly246, Gly271–Ser273, and Arg289–Gly293 each bind GMP. Residues Met272, Tyr288–Arg289, and Ser317–Thr320 each bind NADP(+).

The protein belongs to the IMPDH/GMPR family.

It carries out the reaction IMP + NH4(+) + NADP(+) = GMP + NADPH + 2 H(+). In terms of biological role, catalyzes the irreversible NADPH-dependent deamination of GMP to IMP. It functions in the conversion of nucleobase, nucleoside and nucleotide derivatives of G to A nucleotides, and in maintaining the intracellular balance of A and G nucleotides. The polypeptide is GMP reductase (Ascaris suum (Pig roundworm)).